Consider the following 231-residue polypeptide: Ubiquinone biosynthesis protein coq-4, mitochondrial (231 aa).

Residues His133, Asp134, His137, and Glu149 each coordinate Zn(2+).

The protein belongs to the COQ4 family. In terms of assembly, component of a multi-subunit COQ enzyme complex. Zn(2+) is required as a cofactor.

The protein localises to the mitochondrion inner membrane. The enzyme catalyses a 4-hydroxy-3-methoxy-5-(all-trans-polyprenyl)benzoate + H(+) = a 2-methoxy-6-(all-trans-polyprenyl)phenol + CO2. It functions in the pathway cofactor biosynthesis; ubiquinone biosynthesis. Its function is as follows. Lyase that catalyzes the C1-decarboxylation of 4-hydroxy-3-methoxy-5-(all-trans-polyprenyl)benzoic acid into 2-methoxy-6-(all-trans-polyprenyl)phenol during ubiquinone biosynthesis. This chain is Ubiquinone biosynthesis protein coq-4, mitochondrial, found in Caenorhabditis elegans.